An 83-amino-acid polypeptide reads, in one-letter code: Hainantoxin-III 4 (83 aa).

The first 21 residues, 1-21 (MKASMYLALAGLVLLFVVGYA), serve as a signal peptide directing secretion. A propeptide spanning residues 22–48 (SESEEKEFPRELLSKIFAVDDFKGKER) is cleaved from the precursor. 3 disulfide bridges follow: Cys50-Cys65, Cys57-Cys70, and Cys64-Cys77. Leu81 is modified (leucine amide).

Belongs to the neurotoxin 10 (Hwtx-1) family. 15 (Hntx-3) subfamily. As to quaternary structure, monomer. As to expression, expressed by the venom gland.

It is found in the secreted. Selective antagonist of neuronal tetrodotoxin (TTX)-sensitive voltage-gated sodium channels (IC(50)=1270 nM on Nav1.1/SCN1A, 270 nM on Nav1.2/SCN2A, 491 nM on Nav1.3/SCN3A and 232 nM on Nav1.7/SCN9A). This toxin suppress Nav1.7 current amplitude without significantly altering the activation, inactivation, and repriming kinetics. Short extreme depolarizations partially activate the toxin-bound channel, indicating voltage-dependent inhibition of this toxin. This toxin increases the deactivation of the Nav1.7 current after extreme depolarizations. The toxin-Nav1.7 complex is gradually dissociated upon prolonged strong depolarizations in a voltage-dependent manner, and the unbound toxin rebinds to Nav1.7 after a long repolarization. Moreover, analysis of chimeric channels showed that the DIIS3-S4 linker is critical for toxin binding to Nav1.7. These data are consistent with this toxin interacting with Nav1.7 site 4 and trapping the domain II voltage sensor in the closed state. The chain is Hainantoxin-III 4 from Cyriopagopus hainanus (Chinese bird spider).